A 445-amino-acid chain; its full sequence is tRNA modification GTPase MnmE (445 aa).

Positions 20, 79, and 119 each coordinate (6S)-5-formyl-5,6,7,8-tetrahydrofolate. The TrmE-type G domain occupies 215-371; that stretch reads GLKLAIIGPP…ILKNIENIAE (157 aa). Asn-225 contacts K(+). Residues 225–230, 244–250, and 269–272 each bind GTP; these read NVGKSS, SNIAGTT, and DTAG. Ser-229 is a binding site for Mg(2+). The K(+) site is built by Ser-244, Ile-246, and Thr-249. Mg(2+) is bound at residue Thr-250. Residue Lys-445 coordinates (6S)-5-formyl-5,6,7,8-tetrahydrofolate.

The protein belongs to the TRAFAC class TrmE-Era-EngA-EngB-Septin-like GTPase superfamily. TrmE GTPase family. As to quaternary structure, homodimer. Heterotetramer of two MnmE and two MnmG subunits. Requires K(+) as cofactor.

The protein resides in the cytoplasm. Functionally, exhibits a very high intrinsic GTPase hydrolysis rate. Involved in the addition of a carboxymethylaminomethyl (cmnm) group at the wobble position (U34) of certain tRNAs, forming tRNA-cmnm(5)s(2)U34. The chain is tRNA modification GTPase MnmE from Rickettsia rickettsii (strain Iowa).